We begin with the raw amino-acid sequence, 180 residues long: PLASMODESMATA CALLOSE-BINDING PROTEIN 5 (180 aa).

The first 29 residues, 1–29 (MIMSLPQCSHLRLSILAATAAMLMVITTA), serve as a signal peptide directing secretion. A disulfide bridge connects residues C42 and C105. The interval 126–151 (PSSKGANNGRLADDTSMGAGQADMSR) is disordered. S157 carries GPI-anchor amidated serine lipidation. A propeptide spans 158–180 (SSWMVTFIGFGSLLTMTWIIHHL) (removed in mature form).

In terms of processing, contains two additional disulfide bonds.

The protein resides in the cell membrane. It is found in the cell junction. Its subcellular location is the plasmodesma. This is PLASMODESMATA CALLOSE-BINDING PROTEIN 5 (PDCB5) from Arabidopsis thaliana (Mouse-ear cress).